A 127-amino-acid chain; its full sequence is Small ribosomal subunit protein eS8 (127 aa).

This sequence belongs to the eukaryotic ribosomal protein eS8 family. As to quaternary structure, part of the 30S ribosomal subunit.

This Pyrococcus abyssi (strain GE5 / Orsay) protein is Small ribosomal subunit protein eS8 (rps8e).